Consider the following 358-residue polypeptide: Photosystem II protein D1 (358 aa).

3 helical membrane-spanning segments follow: residues 28 to 45 (YVGW…AAAI), 117 to 132 (HFLI…QWEL), and 141 to 155 (WICV…AAFA). Histidine 117 is a chlorophyll a binding site. Tryptophan 125 is a pheophytin a binding site. [CaMn4O5] cluster is bound by residues aspartate 169 and glutamate 188. A helical transmembrane segment spans residues 196 to 217 (FHMIGVAGMFGGSLFSAMHGSL). Histidine 197 provides a ligand contact to chlorophyll a. A quinone is bound by residues histidine 214 and 263–264 (SF). Histidine 214 lines the Fe cation pocket. Residue histidine 271 coordinates Fe cation. Residues 273 to 287 (FLAAWPVICIWITSL) form a helical membrane-spanning segment. [CaMn4O5] cluster-binding residues include histidine 331, glutamate 332, aspartate 341, and alanine 343. Residues 344 to 358 (AAESTPVALIAPAIG) constitute a propeptide that is removed on maturation.

This sequence belongs to the reaction center PufL/M/PsbA/D family. As to quaternary structure, PSII is composed of 1 copy each of membrane proteins PsbA, PsbB, PsbC, PsbD, PsbE, PsbF, PsbH, PsbI, PsbJ, PsbK, PsbL, PsbM, PsbT, PsbX, PsbY, Psb30/Ycf12, peripheral proteins PsbO, CyanoQ (PsbQ), PsbU, PsbV and a large number of cofactors. It forms dimeric complexes. The cofactor is The D1/D2 heterodimer binds P680, chlorophylls that are the primary electron donor of PSII, and subsequent electron acceptors. It shares a non-heme iron and each subunit binds pheophytin, quinone, additional chlorophylls, carotenoids and lipids. D1 provides most of the ligands for the Mn4-Ca-O5 cluster of the oxygen-evolving complex (OEC). There is also a Cl(-1) ion associated with D1 and D2, which is required for oxygen evolution. The PSII complex binds additional chlorophylls, carotenoids and specific lipids.. Tyr-160 forms a radical intermediate that is referred to as redox-active TyrZ, YZ or Y-Z. Post-translationally, C-terminally processed by CtpA; processing is essential to allow assembly of the oxygen-evolving complex and thus photosynthetic growth.

It is found in the cellular thylakoid membrane. The catalysed reaction is 2 a plastoquinone + 4 hnu + 2 H2O = 2 a plastoquinol + O2. Its function is as follows. Photosystem II (PSII) is a light-driven water:plastoquinone oxidoreductase that uses light energy to abstract electrons from H(2)O, generating O(2) and a proton gradient subsequently used for ATP formation. It consists of a core antenna complex that captures photons, and an electron transfer chain that converts photonic excitation into a charge separation. The D1/D2 (PsbA/PsbD) reaction center heterodimer binds P680, the primary electron donor of PSII as well as several subsequent electron acceptors. The protein is Photosystem II protein D1 of Prochlorococcus marinus (strain MIT 9303).